A 498-amino-acid chain; its full sequence is Beta-1,3-glucosyltransferase (498 aa).

The Cytoplasmic segment spans residues 1–6 (MRPPAC). The chain crosses the membrane as a helical; Signal-anchor for type II membrane protein span at residues 7–27 (WWLLAPPALLALLTCSLAFGL). Residues 28 to 498 (ASEDTKKEVK…ETQKGFREEL (471 aa)) are Lumenal-facing. Asn-336 carries N-linked (GlcNAc...) asparagine glycosylation. The Prevents secretion from ER signature appears at 495–498 (REEL).

Belongs to the glycosyltransferase 31 family. As to expression, widely expressed, with highest levels in testis and uterus.

The protein resides in the endoplasmic reticulum membrane. It functions in the pathway protein modification; protein glycosylation. Functionally, O-glucosyltransferase that transfers glucose toward fucose with a beta-1,3 linkage. Specifically glucosylates O-linked fucosylglycan on TSP type-1 domains of proteins, thereby contributing to elongation of O-fucosylglycan. In Homo sapiens (Human), this protein is Beta-1,3-glucosyltransferase.